Reading from the N-terminus, the 550-residue chain is Glucose-6-phosphate isomerase (550 aa).

Glu356 acts as the Proton donor in catalysis. Active-site residues include His387 and Lys515.

This sequence belongs to the GPI family.

The protein resides in the cytoplasm. It catalyses the reaction alpha-D-glucose 6-phosphate = beta-D-fructose 6-phosphate. The protein operates within carbohydrate biosynthesis; gluconeogenesis. It participates in carbohydrate degradation; glycolysis; D-glyceraldehyde 3-phosphate and glycerone phosphate from D-glucose: step 2/4. Its function is as follows. Catalyzes the reversible isomerization of glucose-6-phosphate to fructose-6-phosphate. The protein is Glucose-6-phosphate isomerase of Photobacterium profundum (strain SS9).